The sequence spans 368 residues: DNA replication and repair protein RecF (368 aa).

An ATP-binding site is contributed by G30–T37.

The protein belongs to the RecF family.

The protein resides in the cytoplasm. In terms of biological role, the RecF protein is involved in DNA metabolism; it is required for DNA replication and normal SOS inducibility. RecF binds preferentially to single-stranded, linear DNA. It also seems to bind ATP. The sequence is that of DNA replication and repair protein RecF from Streptococcus pyogenes serotype M18 (strain MGAS8232).